The following is an 84-amino-acid chain: Large ribosomal subunit protein eL34 (84 aa).

Belongs to the eukaryotic ribosomal protein eL34 family.

This is Large ribosomal subunit protein eL34 (ribL34e) from Pyrobaculum aerophilum (strain ATCC 51768 / DSM 7523 / JCM 9630 / CIP 104966 / NBRC 100827 / IM2).